We begin with the raw amino-acid sequence, 196 residues long: Phosphoheptose isomerase (196 aa).

The SIS domain occupies 38 to 196 (LIAGYRAGAR…VEHALFAPRQ (159 aa)). Residue 53 to 55 (NGG) participates in substrate binding. His-62 and Glu-66 together coordinate Zn(2+). Residues Glu-66, 95 to 96 (ND), 121 to 123 (STS), Ser-126, and Gln-173 each bind substrate. Zn(2+)-binding residues include Gln-173 and His-181.

It belongs to the SIS family. GmhA subfamily. The cofactor is Zn(2+).

It localises to the cytoplasm. It carries out the reaction 2 D-sedoheptulose 7-phosphate = D-glycero-alpha-D-manno-heptose 7-phosphate + D-glycero-beta-D-manno-heptose 7-phosphate. It functions in the pathway carbohydrate biosynthesis; D-glycero-D-manno-heptose 7-phosphate biosynthesis; D-glycero-alpha-D-manno-heptose 7-phosphate and D-glycero-beta-D-manno-heptose 7-phosphate from sedoheptulose 7-phosphate: step 1/1. In terms of biological role, catalyzes the isomerization of sedoheptulose 7-phosphate in D-glycero-D-manno-heptose 7-phosphate. This is Phosphoheptose isomerase from Mycobacterium bovis (strain ATCC BAA-935 / AF2122/97).